A 477-amino-acid polypeptide reads, in one-letter code: 3-isopropylmalate dehydratase large subunit (477 aa).

[4Fe-4S] cluster contacts are provided by Cys352, Cys413, and Cys416.

The protein belongs to the aconitase/IPM isomerase family. LeuC type 1 subfamily. In terms of assembly, heterodimer of LeuC and LeuD. The cofactor is [4Fe-4S] cluster.

It catalyses the reaction (2R,3S)-3-isopropylmalate = (2S)-2-isopropylmalate. It functions in the pathway amino-acid biosynthesis; L-leucine biosynthesis; L-leucine from 3-methyl-2-oxobutanoate: step 2/4. Catalyzes the isomerization between 2-isopropylmalate and 3-isopropylmalate, via the formation of 2-isopropylmaleate. The sequence is that of 3-isopropylmalate dehydratase large subunit from Pseudomonas entomophila (strain L48).